A 326-amino-acid chain; its full sequence is Putative GTPase CC_2483 (326 aa).

GTP contacts are provided by residues G61–T69, D203, and S238–L240.

This sequence belongs to the SIMIBI class G3E GTPase family. ArgK/MeaB subfamily.

Its function is as follows. May have GTPase activity. May also bind and hydrolyze ATP. May function as chaperone. In Caulobacter vibrioides (strain ATCC 19089 / CIP 103742 / CB 15) (Caulobacter crescentus), this protein is Putative GTPase CC_2483.